The chain runs to 96 residues: Small ribosomal subunit protein bS6 (96 aa).

The protein belongs to the bacterial ribosomal protein bS6 family.

In terms of biological role, binds together with bS18 to 16S ribosomal RNA. The protein is Small ribosomal subunit protein bS6 of Beutenbergia cavernae (strain ATCC BAA-8 / DSM 12333 / CCUG 43141 / JCM 11478 / NBRC 16432 / NCIMB 13614 / HKI 0122).